A 207-amino-acid polypeptide reads, in one-letter code: Large ribosomal subunit protein uL4 (207 aa).

Residues 45–89 form a disordered region; the sequence is RQGTHKVKTRSEVRGGGRKPWRQKGTGRARQGSIRSPQWRGGGTV. The span at 60–71 shows a compositional bias: basic residues; that stretch reads GGRKPWRQKGTG.

It belongs to the universal ribosomal protein uL4 family. Part of the 50S ribosomal subunit.

One of the primary rRNA binding proteins, this protein initially binds near the 5'-end of the 23S rRNA. It is important during the early stages of 50S assembly. It makes multiple contacts with different domains of the 23S rRNA in the assembled 50S subunit and ribosome. Its function is as follows. Forms part of the polypeptide exit tunnel. The polypeptide is Large ribosomal subunit protein uL4 (Bacillus mycoides (strain KBAB4) (Bacillus weihenstephanensis)).